Here is a 306-residue protein sequence, read N- to C-terminus: Ornithine carbamoyltransferase (306 aa).

Carbamoyl phosphate is bound by residues 46–49, Q73, R97, and 124–127; these read STRT and HPTQ. L-ornithine is bound by residues N156, D220, and 224–225; that span reads SM. Residues 260–261 and R288 contribute to the carbamoyl phosphate site; that span reads CL.

It belongs to the aspartate/ornithine carbamoyltransferase superfamily. OTCase family.

It localises to the cytoplasm. The catalysed reaction is carbamoyl phosphate + L-ornithine = L-citrulline + phosphate + H(+). It participates in amino-acid degradation; L-arginine degradation via ADI pathway; carbamoyl phosphate from L-arginine: step 2/2. Functionally, reversibly catalyzes the transfer of the carbamoyl group from carbamoyl phosphate (CP) to the N(epsilon) atom of ornithine (ORN) to produce L-citrulline. In Campylobacter jejuni subsp. doylei (strain ATCC BAA-1458 / RM4099 / 269.97), this protein is Ornithine carbamoyltransferase.